The sequence spans 132 residues: Fatty acid-binding protein 2 (132 aa).

An N-acetylserine modification is found at serine 2. Residues glutamine 40 and 128–130 each bind hexadecanoate; that span reads RYY.

This sequence belongs to the calycin superfamily. Fatty-acid binding protein (FABP) family. In terms of assembly, monomer. Midgut.

Its subcellular location is the cytoplasm. Functionally, binds fatty acids in a 1:1 molar ratio. The polypeptide is Fatty acid-binding protein 2 (MFB2) (Manduca sexta (Tobacco hawkmoth)).